Here is a 976-residue protein sequence, read N- to C-terminus: Ephrin type-A receptor 2 (976 aa).

The N-terminal stretch at 1–23 (MELQAARACFALLWGCALAAAAA) is a signal peptide. Positions 1–206 (MELQAARACF…YYKKCPELLQ (206 aa)) are mediates interaction with CLDN4. The Extracellular segment spans residues 24–537 (AQGKEVVLLD…SPEGSGNLAV (514 aa)). One can recognise an Eph LBD domain in the interval 28–206 (EVVLLDFAAA…YYKKCPELLQ (179 aa)). 2 disulfide bridges follow: cysteine 70–cysteine 188 and cysteine 105–cysteine 115. One can recognise a Fibronectin type-III 1 domain in the interval 328–432 (PPSAPHYLTA…TSRSFRTASV (105 aa)). N-linked (GlcNAc...) asparagine glycans are attached at residues asparagine 407 and asparagine 435. The Fibronectin type-III 2 domain occupies 438–529 (EPPKVRLEGR…KVHEFQTLSP (92 aa)). The chain crosses the membrane as a helical span at residues 538 to 558 (IGGVAVGVVLLLVLAGVGFFI). Topologically, residues 559 to 976 (HRRRKNQRAR…DQVNTVGIPI (418 aa)) are cytoplasmic. Phosphoserine is present on serine 570. Tyrosine 575 is subject to Phosphotyrosine. Residue serine 579 is modified to Phosphoserine. At tyrosine 588 the chain carries Phosphotyrosine; by autocatalysis. Phosphotyrosine is present on tyrosine 594. The tract at residues 606–906 (TEIHPSCVTR…STSGSEGVPF (301 aa)) is mediates interaction with ARHGEF16 and ELMO2. The region spanning 613 to 875 (VTRQKVIGAG…DIVSILDKLI (263 aa)) is the Protein kinase domain. Residue 619–627 (IGAGEFGEV) coordinates ATP. At tyrosine 628 the chain carries Phosphotyrosine. Lysine 646 serves as a coordination point for ATP. Threonine 647 bears the Phosphothreonine mark. Tyrosine 735 carries the phosphotyrosine; by autocatalysis modification. Aspartate 739 (proton acceptor) is an active-site residue. Tyrosine 772 is modified (phosphotyrosine). Residues serine 869 and serine 892 each carry the phosphoserine modification. A negatively regulates interaction with ARHGEF16 region spans residues 886-976 (DFDPRVSIRL…DQVNTVGIPI (91 aa)). A Phosphoserine; by PKB/AKT1, RPS6KA1, RPS6KA3 AND PKA modification is found at serine 897. A Phosphoserine modification is found at serine 901. Residues 904-968 (VPFRTVSEWL…AYSLLGLKDQ (65 aa)) enclose the SAM domain. Position 921 is a phosphotyrosine; by autocatalysis (tyrosine 921). Position 930 is a phosphotyrosine (tyrosine 930). The PDZ-binding signature appears at 974–976 (IPI).

It belongs to the protein kinase superfamily. Tyr protein kinase family. Ephrin receptor subfamily. In terms of assembly, homodimer. Interacts with SLA. Interacts (phosphorylated form) with VAV2, VAV3 and PI3-kinase p85 subunit (PIK3R1, PIK3R2 or PIK3R3); critical for the EFNA1-induced activation of RAC1 which stimulates cell migration. Interacts with INPPL1; regulates activated EPHA2 endocytosis and degradation. Interacts (inactivated form) with PTK2/FAK1 and interacts (EFNA1 ligand-activated form) with PTPN11; regulates integrin-mediated adhesion. Interacts with ARHGEF16, DOCK4 and ELMO2; mediates ligand-independent activation of RAC1 which stimulates cell migration. Interacts with CLDN4; phosphorylates CLDN4 and may regulate tight junctions. Interacts with ACP1. Interacts (via SAM domain) with ANKS1A (via SAM domain). Interacts with CEMIP. Interacts with NCK1; may regulate EPHA2 activity in cell migration and adhesion. Interacts with TIMD4. As to quaternary structure, (Microbial infection) Interacts with human herpes virus 8/HHV-8 glycoprotein L/gL and glycoprotein H/gH heterodimer; this interaction triggers EPHA2 phosphorylation and endocytosis, allowing virus entry. (Microbial infection) Interacts with human cytomegalovirus (HCMV) glycoprotein L/gL and glycoprotein H/gH heterodimer. In terms of assembly, (Microbial infection) Interacts with Epstein-Barr virus/HHV-4 glycoprotein L/gL and glycoprotein H/gH heterodimer; this interaction facilitates virus internalization and fusion. In terms of processing, autophosphorylates. Phosphorylated on tyrosine upon binding and activation by EFNA1. Phosphorylated residues Tyr-588 and Tyr-594 are required for binding VAV2 and VAV3 while phosphorylated residues Tyr-735 and Tyr-930 are required for binding PI3-kinase p85 subunit (PIK3R1, PIK3R2 or PIK3R3). These phosphorylated residues are critical for recruitment of VAV2 and VAV3 and PI3-kinase p85 subunit which transduce downstream signaling to activate RAC1 GTPase and cell migration. Dephosphorylation of Tyr-930 by PTPRF prevents the interaction of EPHA2 with NCK1. Phosphorylated at Ser-897 by PKB; serum-induced phosphorylation which targets EPHA2 to the cell leading edge and stimulates cell migration. Phosphorylation by PKB is inhibited by EFNA1-activated EPHA2 which regulates PKB activity via a reciprocal regulatory loop. Phosphorylated at Ser-897 in response to TNF by RPS6KA1 and RPS6KA3; RPS6KA-EPHA2 signaling pathway controls cell migration. Phosphorylated at Ser-897 by PKA; blocks cell retraction induced by EPHA2 kinase activity. Dephosphorylated by ACP1. Ubiquitinated by CHIP/STUB1. Ubiquitination is regulated by the HSP90 chaperone and regulates the receptor stability and activity through proteasomal degradation. ANKS1A prevents ubiquitination and degradation. Expressed in brain and glioma tissue and glioma cell lines (at protein level). Expressed most highly in tissues that contain a high proportion of epithelial cells, e.g. skin, intestine, lung, and ovary.

It is found in the cell membrane. Its subcellular location is the cell projection. The protein resides in the ruffle membrane. The protein localises to the lamellipodium membrane. It localises to the cell junction. It is found in the focal adhesion. It carries out the reaction L-tyrosyl-[protein] + ATP = O-phospho-L-tyrosyl-[protein] + ADP + H(+). Functionally, receptor tyrosine kinase which binds promiscuously membrane-bound ephrin-A family ligands residing on adjacent cells, leading to contact-dependent bidirectional signaling into neighboring cells. The signaling pathway downstream of the receptor is referred to as forward signaling while the signaling pathway downstream of the ephrin ligand is referred to as reverse signaling. Activated by the ligand ephrin-A1/EFNA1 regulates migration, integrin-mediated adhesion, proliferation and differentiation of cells. Regulates cell adhesion and differentiation through DSG1/desmoglein-1 and inhibition of the ERK1/ERK2 (MAPK3/MAPK1, respectively) signaling pathway. May also participate in UV radiation-induced apoptosis and have a ligand-independent stimulatory effect on chemotactic cell migration. During development, may function in distinctive aspects of pattern formation and subsequently in development of several fetal tissues. Involved for instance in angiogenesis, in early hindbrain development and epithelial proliferation and branching morphogenesis during mammary gland development. Engaged by the ligand ephrin-A5/EFNA5 may regulate lens fiber cells shape and interactions and be important for lens transparency development and maintenance. With ephrin-A2/EFNA2 may play a role in bone remodeling through regulation of osteoclastogenesis and osteoblastogenesis. Its function is as follows. (Microbial infection) Acts as a receptor for hepatitis C virus (HCV) in hepatocytes and facilitates its cell entry. Mediates HCV entry by promoting the formation of the CD81-CLDN1 receptor complexes that are essential for HCV entry and by enhancing membrane fusion of cells expressing HCV envelope glycoproteins. In terms of biological role, acts as a receptor for human cytomegalovirus (HCMV) to mediate viral entry and fusion in glioblastoma cells. This is Ephrin type-A receptor 2 (EPHA2) from Homo sapiens (Human).